The chain runs to 1295 residues: Phosphoribosylformylglycinamidine synthase (1295 aa).

Residues tryptophan 305–lysine 327 form a disordered region. Residues glycine 307–aspartate 318, threonine 386–tyrosine 388, and alanine 678 each bind ATP. The Mg(2+) site is built by aspartate 679, glutamate 718, asparagine 722, and aspartate 884. An ATP-binding site is contributed by serine 886. The Glutamine amidotransferase type-1 domain occupies valine 1042–glycine 1295. The active-site Nucleophile is cysteine 1135. Active-site residues include histidine 1260 and glutamate 1262.

The protein in the N-terminal section; belongs to the FGAMS family. Monomer.

It localises to the cytoplasm. It catalyses the reaction N(2)-formyl-N(1)-(5-phospho-beta-D-ribosyl)glycinamide + L-glutamine + ATP + H2O = 2-formamido-N(1)-(5-O-phospho-beta-D-ribosyl)acetamidine + L-glutamate + ADP + phosphate + H(+). Its pathway is purine metabolism; IMP biosynthesis via de novo pathway; 5-amino-1-(5-phospho-D-ribosyl)imidazole from N(2)-formyl-N(1)-(5-phospho-D-ribosyl)glycinamide: step 1/2. In terms of biological role, phosphoribosylformylglycinamidine synthase involved in the purines biosynthetic pathway. Catalyzes the ATP-dependent conversion of formylglycinamide ribonucleotide (FGAR) and glutamine to yield formylglycinamidine ribonucleotide (FGAM) and glutamate. The sequence is that of Phosphoribosylformylglycinamidine synthase from Salmonella typhi.